Reading from the N-terminus, the 114-residue chain is Cuticle protein AMP5 (114 aa).

At Gln1 the chain carries Pyrrolidone carboxylic acid. The region spanning 18-83 is the Chitin-binding type R&amp;R domain; it reads AGNYFYEFET…VDSPLIPVAP (66 aa).

In terms of tissue distribution, arthrodial membrane.

The polypeptide is Cuticle protein AMP5 (Homarus americanus (American lobster)).